The following is a 92-amino-acid chain: DNA-directed RNA polymerase subunit Rpo11 (92 aa).

The protein belongs to the archaeal Rpo11/eukaryotic RPB11/RPC19 RNA polymerase subunit family. As to quaternary structure, part of the RNA polymerase complex.

The protein resides in the cytoplasm. It carries out the reaction RNA(n) + a ribonucleoside 5'-triphosphate = RNA(n+1) + diphosphate. Functionally, DNA-dependent RNA polymerase (RNAP) catalyzes the transcription of DNA into RNA using the four ribonucleoside triphosphates as substrates. This chain is DNA-directed RNA polymerase subunit Rpo11, found in Methanosarcina acetivorans (strain ATCC 35395 / DSM 2834 / JCM 12185 / C2A).